A 463-amino-acid polypeptide reads, in one-letter code: Na(+)/H(+) antiporter NhaA 3 (463 aa).

The next 11 membrane-spanning stretches (helical) occupy residues 28–48 (FLAT…AALL), 79–99 (LHHW…GLEI), 114–134 (IAVP…IYFV), 144–164 (GWGI…ALFG), 173–193 (LFLL…VGIF), 196–216 (DHLN…ILGL), 232–252 (LVLW…GVLV), 305–325 (VLHP…NAGV), 344–364 (VAAA…VAAI), 377–397 (YGHL…SLFI), and 413–433 (IGIL…LRVL). The tract at residues 444-463 (TDEPVPRLPPRPWRAPVPAK) is disordered. A compositionally biased stretch (pro residues) spans 449–463 (PRLPPRPWRAPVPAK).

It belongs to the NhaA Na(+)/H(+) (TC 2.A.33) antiporter family.

The protein resides in the cell membrane. It carries out the reaction Na(+)(in) + 2 H(+)(out) = Na(+)(out) + 2 H(+)(in). Its function is as follows. Na(+)/H(+) antiporter that extrudes sodium in exchange for external protons. The chain is Na(+)/H(+) antiporter NhaA 3 from Frankia alni (strain DSM 45986 / CECT 9034 / ACN14a).